The sequence spans 185 residues: Elongation factor P 1 (185 aa).

It belongs to the elongation factor P family.

It is found in the cytoplasm. It participates in protein biosynthesis; polypeptide chain elongation. Involved in peptide bond synthesis. Stimulates efficient translation and peptide-bond synthesis on native or reconstituted 70S ribosomes in vitro. Probably functions indirectly by altering the affinity of the ribosome for aminoacyl-tRNA, thus increasing their reactivity as acceptors for peptidyl transferase. The sequence is that of Elongation factor P 1 (efp1) from Chlamydia pneumoniae (Chlamydophila pneumoniae).